Reading from the N-terminus, the 998-residue chain is Poly [ADP-ribose] polymerase 1 (998 aa).

2 consecutive PARP-type zinc fingers follow at residues 1–78 (AKSG…ETGG) and 99–189 (FAAE…PAVK). 8 residues coordinate Zn(2+): C8, C11, H40, C43, C111, C114, H145, and C148. Residues 185 to 211 (LPAVKNEGKRKADEVDGHSAATKKKIK) are disordered. Residues 190 to 201 (NEGKRKADEVDG) show a composition bias toward basic and acidic residues. 2 short sequence motifs (nuclear localization signal) span residues 193-195 (KRK) and 207-212 (KKKIKK). A PADR1 zinc-binding domain is found at 211–345 (KKEKEKESKL…FKRHDRAFPP (135 aa)). A zinc ribbon region spans residues 276–318 (GALLPCEECSGQFVFKGDAYYCTGDLSAWTKCVAKTQTPNRKD). Zn(2+) contacts are provided by C281, C284, C297, and C307. Pro residues predominate over residues 348–361 (APTPISPPAAPEPK). The interval 348–370 (APTPISPPAAPEPKPTVEETFPE) is disordered. An automodification domain region spans residues 357–507 (APEPKPTVEE…GSNKSEKKMK (151 aa)). The region spanning 369-460 (PEGKPLTNTK…SVQELLSQFG (92 aa)) is the BRCT domain. Residues E391, E397, E419, E428, E429, E445, E447, E454, E467, E471, E477, E495, E496, and E503 each carry the polyADP-ribosyl glutamic acid modification. Residues 471–510 (EAVQPTEKQPSSGPVAGKSSGKVKEEKGSNKSEKKMKLTV) form a disordered region. A compositionally biased stretch (basic and acidic residues) spans 492-506 (KVKEEKGSNKSEKKM). Residues 525-621 (SCHVLETGGK…PNFTKYPKKF (97 aa)) enclose the WGR domain. Residues 645–762 (KSKLAKPVQE…DIEVAYSLLR (118 aa)) form the PARP alpha-helical domain. Residues 771–997 (DPIDVKYEKI…LKFNYKGGMM (227 aa)) enclose the PARP catalytic domain. NAD(+) contacts are provided by residues 845–847 (HGS), G854, R861, and S887. The active-site For poly [ADP-ribose] polymerase activity is E971.

Belongs to the ARTD/PARP family. In terms of assembly, homodimer; PARP-type zinc-fingers from separate parp1 molecules form a dimer module that specifically recognizes DNA strand breaks. In terms of processing, poly-ADP-ribosylated on serine, glutamate and aspartate residues by autocatalysis. Auto-ADP-ribosylation on serine takes place following interaction with HPF1. Auto poly-ADP-ribosylation on serine residues promotes its dissociation from chromatin.

The protein localises to the chromosome. The protein resides in the nucleus. It is found in the nucleolus. It localises to the cytoplasm. Its subcellular location is the cytosol. It carries out the reaction NAD(+) + (ADP-D-ribosyl)n-acceptor = nicotinamide + (ADP-D-ribosyl)n+1-acceptor + H(+).. It catalyses the reaction L-seryl-[protein] + NAD(+) = O-(ADP-D-ribosyl)-L-seryl-[protein] + nicotinamide + H(+). The enzyme catalyses L-aspartyl-[protein] + NAD(+) = 4-O-(ADP-D-ribosyl)-L-aspartyl-[protein] + nicotinamide. The catalysed reaction is L-glutamyl-[protein] + NAD(+) = 5-O-(ADP-D-ribosyl)-L-glutamyl-[protein] + nicotinamide. It carries out the reaction L-tyrosyl-[protein] + NAD(+) = O-(ADP-D-ribosyl)-L-tyrosyl-[protein] + nicotinamide + H(+). It catalyses the reaction L-histidyl-[protein] + NAD(+) = N(tele)-(ADP-D-ribosyl)-L-histidyl-[protein] + nicotinamide + H(+). Its activity is regulated as follows. ADP-ribosyltransferase activity is regulated via an allosteric activation mechanism. In absence of activation signal, parp1 is autoinhibited by the PARP alpha-helical domain (also named HD region), which prevents effective NAD(+)-binding. Activity is highly stimulated by signals, such as DNA strand breaks. Binding to damaged DNA unfolds the PARP alpha-helical domain, relieving autoinhibition. Poly-ADP-ribosyltransferase activity is tightly regulated and parp1 is removed from damaged chromatin following initial poly-ADP-ribosylation of chromatin to avoid prolonged residence (trapping) that has cytotoxic consequences. A number of factors or post-translational modifications (auto-poly-ADP-ribosylation) promote parp1 removal from chromatin. Its function is as follows. Poly-ADP-ribosyltransferase that mediates poly-ADP-ribosylation of proteins and plays a key role in DNA repair. Mediates glutamate, aspartate, serine, histidine or tyrosine ADP-ribosylation of proteins: the ADP-D-ribosyl group of NAD(+) is transferred to the acceptor carboxyl group of target residues and further ADP-ribosyl groups are transferred to the 2'-position of the terminal adenosine moiety, building up a polymer with an average chain length of 20-30 units. Serine ADP-ribosylation of proteins constitutes the primary form of ADP-ribosylation of proteins in response to DNA damage. Specificity for the different amino acids is conferred by interacting factors, such as hpf1 and nmnat1. Following interaction with hpf1, catalyzes serine ADP-ribosylation of target proteins; hpf1 confers serine specificity by completing the parp1 active site. Also catalyzes tyrosine ADP-ribosylation of target proteins following interaction with hpf1. Following interaction with nmnat1, catalyzes glutamate and aspartate ADP-ribosylation of target proteins; nmnat1 confers glutamate and aspartate specificity. Parp1 initiates the repair of DNA breaks: recognizes and binds DNA breaks within chromatin and recruits hpf1, licensing serine ADP-ribosylation of target proteins, such as histones (H2BS6ADPr and H3S10ADPr), thereby promoting decompaction of chromatin and the recruitment of repair factors leading to the reparation of DNA strand breaks. In addition to base excision repair (BER) pathway, also involved in double-strand breaks (DSBs) repair. Mediates the poly-ADP-ribosylation of a number of proteins. In addition to proteins, also able to ADP-ribosylate DNA: catalyzes ADP-ribosylation of DNA strand break termini containing terminal phosphates and a 2'-OH group in single- and double-stranded DNA, respectively. Parp1-mediated DNA repair in neurons plays a role in sleep: senses DNA damage in neurons and promotes sleep, facilitating efficient DNA repair. In addition to DNA repair, also involved in other processes, such as transcription regulation, programmed cell death, membrane repair, adipogenesis and innate immunity. Acts as a repressor of transcription: binds to nucleosomes and modulates chromatin structure in a manner similar to histone H1, thereby altering RNA polymerase II. Acts both as a positive and negative regulator of transcription elongation, depending on the context. Poly-ADP-ribose chains generated by parp1 also play a role in poly-ADP-ribose-dependent cell death, a process named parthanatos. Also acts as a negative regulator of the cGAS-STING pathway by mediating poly-ADP-ribosylation and inactivation of cgas. Acts as a negative regulator of adipogenesis by catalyzing poly ADP-ribosylation of histone H2B on 'Glu-35' (H2BE35ADPr). The polypeptide is Poly [ADP-ribose] polymerase 1 (parp1) (Xenopus laevis (African clawed frog)).